A 160-amino-acid chain; its full sequence is Protein TCP17 (160 aa).

The protein resides in the cytoplasm. This is Protein TCP17 from Trypanosoma cruzi.